The sequence spans 537 residues: MQLNPAEISELIKSRIEGLGVSADIRNQGTVVSVTDGIVRVHGLSDAMQGEMLEFPPTADGTPSFGLALNLERDSVGAVILGEYEHISEGGTVKCTGRILEVPVGPELIGRVVNALGQPIDGKGPINAKMTDVIEKVAPGVIARKSVDQPMQTGLKSIDSMVPVGRGQRELIIGDRQTGKTAVAIDAIINQKGQNMTCVYVAIGQKASSIKNVVRSLEQAGAMDYTIVVAASASESAAMQYVSAYSGCTMGEYFRDRGQDALIVYDDLSKQAVAYRQVSLLLRRPPGREAYPGDVFYLHSRLLERAARVNADYVEAFTKGAVKGKTGSLTALPIIETQAGDVSAFVPTNVISITDGQIFLETSLFNAGIRPAINAGISVSRVGSSAQTNLIKNQSGGIRTDLAQYRELAAFAQFASDLDEATRKQLDRGARVTELLKQTQYSPLPISLMNATLFAVNKGFTDDIDVKKVLPFEHGFHQLLKTSHAALLETMEKNGAKWDVKPAKPDDSAEKQAFKKVCQDAEAELLAAATSFKKSFA.

Residue Gly-174–Thr-181 participates in ATP binding.

Belongs to the ATPase alpha/beta chains family. In terms of assembly, F-type ATPases have 2 components, CF(1) - the catalytic core - and CF(0) - the membrane proton channel. CF(1) has five subunits: alpha(3), beta(3), gamma(1), delta(1), epsilon(1). CF(0) has three main subunits: a(1), b(2) and c(9-12). The alpha and beta chains form an alternating ring which encloses part of the gamma chain. CF(1) is attached to CF(0) by a central stalk formed by the gamma and epsilon chains, while a peripheral stalk is formed by the delta and b chains.

Its subcellular location is the cell inner membrane. The catalysed reaction is ATP + H2O + 4 H(+)(in) = ADP + phosphate + 5 H(+)(out). Functionally, produces ATP from ADP in the presence of a proton gradient across the membrane. The alpha chain is a regulatory subunit. The protein is ATP synthase subunit alpha of Verminephrobacter eiseniae (strain EF01-2).